The following is a 690-amino-acid chain: MSSNQEPLVEGKIKDKHSETHGFEVDVNQMMDTMIKSVYSSKELFLRELVSNSSDACDKLKALYFQLREKGCVLDPVTSLGIEIIPNKDNRTLTIKDNGIGMTKPDLMNFIGTIASSGTKKFREEMKEKGNSADASNLIGQFGLGFYSSYLVAERVDLITKHPSDEALVWTSTGRDVYTIEEYDGEPFAHGTSLVLYIKEGEEEFLDPKRISEIVKKYSLFVFYPIYTYVEKEIEEPEEKKDEEKEDEKVEEETAEPRVEEVREKRLKKVTEREQINVEKPLWKRNIKEVPEEELKSFYKTVSGDWDDFLAVDFWHIEGLLSIELLMFIPKRARFDMFNKNKKNNNIKLYCKNVFVTDDFGDAIPEWMSFVSGVVASDDIPMNISREMIQGTNVMKLVKKTLPQKIFEMIGKLALDAEKYKTFYKEFGNCLKMAIGEASEGQQDGYAKCLRYFTTKSGEEAISLDTYVERMAPNQKQIYVITGLSKEQVKSNPALDAFQKYEVIYMHEVMDEVMLRGLKKYKGHTIQRITSEGVELPEDEASNEEVVKSFEEFCKKVKDILSSKVEKVTVNPRLVSVPAVISTTKYSLSGTMENIMKSQPVTEANPFAAMTAVSKKIFEMNPNHQLVKNLKALFDSNEIEKMNRILEVFFETVLIHNGFVLSDPKGFCANVFDFLCSEEVRCEEPVEEVQ.

The ATP site is built by Asn52, Asp97, and Phe146. Residues 235–257 form a disordered region; the sequence is EEPEEKKDEEKEDEKVEEETAEP. The segment covering 244–254 has biased composition (acidic residues); that stretch reads EKEDEKVEEET. Residue Arg386 coordinates ATP. Residues 686 to 690 carry the TPR repeat-binding motif; sequence VEEVQ.

Belongs to the heat shock protein 90 family. In terms of assembly, homodimer.

The protein localises to the cytoplasm. Molecular chaperone that promotes the maturation, structural maintenance and proper regulation of specific target proteins involved in cell cycle control and signal transduction. Undergoes a functional cycle that is linked to its ATPase activity. The nucleotide-free form of the dimer is found in an open conformation in which the N-termini are not dimerized and the complex is ready for client protein binding. Binding of ATP induces large conformational changes, resulting in the formation of a ring-like closed structure in which the N-terminal domains associate intramolecularly with the middle domain and also dimerize with each other, stimulating their intrinsic ATPase activity and acting as a clamp on the substrate. Finally, ATP hydrolysis results in the release of the substrate. This cycle probably induces conformational changes in the client proteins, thereby causing their activation. Interacts dynamically with various co-chaperones that modulate its substrate recognition, ATPase cycle and chaperone function. Required for growth at high temperatures. This chain is Heat shock protein 90 (HSP90), found in Encephalitozoon cuniculi (strain GB-M1) (Microsporidian parasite).